Consider the following 285-residue polypeptide: 33 kDa chaperonin (285 aa).

2 disulfides stabilise this stretch: C228/C230 and C261/C264.

The protein belongs to the HSP33 family. Post-translationally, under oxidizing conditions two disulfide bonds are formed involving the reactive cysteines. Under reducing conditions zinc is bound to the reactive cysteines and the protein is inactive.

Its subcellular location is the cytoplasm. In terms of biological role, redox regulated molecular chaperone. Protects both thermally unfolding and oxidatively damaged proteins from irreversible aggregation. Plays an important role in the bacterial defense system toward oxidative stress. In Hahella chejuensis (strain KCTC 2396), this protein is 33 kDa chaperonin.